Here is a 156-residue protein sequence, read N- to C-terminus: AP-1 complex subunit sigma-1 (156 aa).

The protein belongs to the adaptor complexes small subunit family. As to quaternary structure, adapter protein complex 1 (AP-1) is a heterotetramer composed of two large adaptins (gamma-type subunit APL4 and beta-type subunit APL2), a medium adaptin (mu-type subunit APM1) and a small adaptin (sigma-type subunit APS1). AP-1 interacts with clathrin. Also a component of the AP-1R complex composed of at least APM2, APL4 and APS1.

Its subcellular location is the cytoplasm. It localises to the nucleus. The protein resides in the cytoplasmic vesicle. It is found in the clathrin-coated vesicle membrane. The protein localises to the endosome. Its subcellular location is the golgi apparatus. Its function is as follows. Component of the adapter complexes which link clathrin to receptors in coated vesicles. Clathrin-associated protein complexes are believed to interact with the cytoplasmic tails of membrane proteins, leading to their selection and concentration. AP19 is probably a subunit of the Golgi membrane adapter. Component of the AP-1-related (AP-1R) complex, an adapter protein complex that mediates sorting of cargo SNARE SNC1. In contrast to the APM1-containing AP-1 complex, AP-1R is incapable of sorting CHS3. This Saccharomyces cerevisiae (strain ATCC 204508 / S288c) (Baker's yeast) protein is AP-1 complex subunit sigma-1 (APS1).